The following is a 142-amino-acid chain: Transcription antitermination protein NusB (142 aa).

It belongs to the NusB family.

In terms of biological role, involved in transcription antitermination. Required for transcription of ribosomal RNA (rRNA) genes. Binds specifically to the boxA antiterminator sequence of the ribosomal RNA (rrn) operons. The polypeptide is Transcription antitermination protein NusB (Persephonella marina (strain DSM 14350 / EX-H1)).